The chain runs to 1120 residues: Topless-related protein 1 (1120 aa).

One can recognise a LisH domain in the interval 4–36 (LSRELVFLILQFLDEEKFKETVHKLEQESGFFF). A CTLH domain is found at 34 to 92 (FFFNMKYFEDEVHNGNWDEVEKYLSGFTKVDDNRYSMKIFFEIRKQKYLEALDRHDRPK). 2 disordered regions span residues 210–235 (ARAP…PLGA) and 283–307 (HPRT…SKRT). A Phosphoserine modification is found at serine 214. 14 WD repeats span residues 353–393 (SQGS…RLVQ), 415–454 (EPVV…DMRQ), 460–501 (AHVG…KRYT), 504–545 (GHEA…SRVD), 548–591 (APGR…VKRT), 595–634 (FHKR…LLTA), 639–678 (GGLQ…RLLH), 699–745 (ERPA…EPSQ), 755–794 (MRVT…RNAT), 822–860 (NPEE…TMAT), 863–903 (PPPP…VKSK), 906–945 (GHSK…KQKS), 999–1038 (ESAA…LRCR), and 1052–1091 (SNVH…GKWG). The disordered stretch occupies residues 1087–1120 (EGKWGVAPPPENGSASAVTATPSVGASASDQPQR). Over residues 1099 to 1120 (GSASAVTATPSVGASASDQPQR) the composition is skewed to polar residues.

Tetramer. Interacts with SNC1 (via TIR domain) and HDA19. Interacts with SPL (via EAR motif). Interacts with SPEAR3/TIE1. Binds to and corepresses GAF1/IDD2. As to expression, highly expressed in stamen primordium, microsporocyte, ovule primordium and megasporocyte during sporogenesis.

Its subcellular location is the nucleus. Functionally, transcriptional corepressor. Activates TIR-NB-LRR R protein-mediated immune responses through repression of negative regulators such as CNGC2/DND1. Negative regulator of jasmonate responses. In Arabidopsis thaliana (Mouse-ear cress), this protein is Topless-related protein 1 (TPR1).